A 557-amino-acid chain; its full sequence is Formate--tetrahydrofolate ligase (557 aa).

65 to 72 (TPAGEGKT) serves as a coordination point for ATP.

Belongs to the formate--tetrahydrofolate ligase family.

It catalyses the reaction (6S)-5,6,7,8-tetrahydrofolate + formate + ATP = (6R)-10-formyltetrahydrofolate + ADP + phosphate. It participates in one-carbon metabolism; tetrahydrofolate interconversion. In Methylorubrum extorquens (strain PA1) (Methylobacterium extorquens), this protein is Formate--tetrahydrofolate ligase.